The primary structure comprises 60 residues: Large ribosomal subunit protein bL32 (60 aa).

This sequence belongs to the bacterial ribosomal protein bL32 family.

The polypeptide is Large ribosomal subunit protein bL32 (Persephonella marina (strain DSM 14350 / EX-H1)).